We begin with the raw amino-acid sequence, 481 residues long: Small ribosomal subunit protein bS1 (481 aa).

S1 motif domains are found at residues 36–105 (GDIV…LSKK), 123–188 (DEAV…LSRR), 209–277 (GAIR…LSLK), and 294–363 (GQIV…LSLK). Residues 437–465 (ATEEAGHGSSEQPPASSTPSAKATGGSLA) form a disordered region. Polar residues predominate over residues 445–457 (SSEQPPASSTPSA).

It belongs to the bacterial ribosomal protein bS1 family.

Binds mRNA; thus facilitating recognition of the initiation point. It is needed to translate mRNA with a short Shine-Dalgarno (SD) purine-rich sequence. This is Small ribosomal subunit protein bS1 (rpsA) from Mycobacterium leprae (strain TN).